A 122-amino-acid polypeptide reads, in one-letter code: MARIAGVDLPRGKRVDIALTYIYGIGRTTAMKILDTTGVNWERSIDDLSADEVNEIRKELEQHYKVEGDLRREVSSNIKRLMDIGCYRGLRHRRGLPVHGQRTHTNARTRKGPRRGAVGKKK.

The tract at residues 95 to 122 (GLPVHGQRTHTNARTRKGPRRGAVGKKK) is disordered.

This sequence belongs to the universal ribosomal protein uS13 family. As to quaternary structure, part of the 30S ribosomal subunit. Forms a loose heterodimer with protein S19. Forms two bridges to the 50S subunit in the 70S ribosome.

Located at the top of the head of the 30S subunit, it contacts several helices of the 16S rRNA. In the 70S ribosome it contacts the 23S rRNA (bridge B1a) and protein L5 of the 50S subunit (bridge B1b), connecting the 2 subunits; these bridges are implicated in subunit movement. Contacts the tRNAs in the A and P-sites. This Desulfovibrio desulfuricans (strain ATCC 27774 / DSM 6949 / MB) protein is Small ribosomal subunit protein uS13.